A 227-amino-acid chain; its full sequence is Protein PhlB (227 aa).

A signal peptide spans 1–35; the sequence is MPEGRRLRRALAIALLALVAVTGLLMMAKEQQMGQ. ANK repeat units lie at residues 75–104, 108–137, 142–171, and 175–204; these read RQVTLLQWAVLSQQPDSVQALLDLGADPAA, DGNSALHTAAMLQDAQYLRLLLAEGAQMNV, TGATPLAAAVLAGREEQLRLLLAAGADTTL, and LGDTPLHLAAKINRRTWRCCCCRPGPMPGR.

Its function is as follows. Cell-protective protein that neutralizes the intracellular lysis capacity of phospholipase A1 through a direct interaction with the enzyme. The polypeptide is Protein PhlB (phlB) (Serratia liquefaciens).